We begin with the raw amino-acid sequence, 333 residues long: Torsin-1A (333 aa).

Positions 1 to 20 (MKLGRAALALLLLAPCVVRA) are cleaved as a signal peptide. An interaction with SNAPIN region spans residues 92–252 (KPKKPLTLSL…VSVFNNKNSG (161 aa)). 103 to 110 (GWTGTGKN) provides a ligand contact to ATP. Residues asparagine 144 and asparagine 159 are each glycosylated (N-linked (GlcNAc...) asparagine). Positions 252–333 (GFWHSSLIDR…FTKLDYYLDD (82 aa)) are interaction with KLC1. The segment at 313–333 (KVFSDKGCKTVFTKLDYYLDD) is interaction with SYNE3.

This sequence belongs to the ClpA/ClpB family. Torsin subfamily. Homohexamer. Interacts with TOR1B; the interaction may be specific of neural tissues. Interacts (ATP-bound) with TOR1AIP1 and TOR1AIP2; the interactions induce ATPase activity. Interacts with KLHL14; preferentially when ATP-free. Interacts with KLC1 (via TPR repeats); the interaction associates TOR1A with the kinesin oligomeric complex. Interacts with COPS4; the interaction associates TOR1A with the CSN complex. Interacts with SNAPIN; the interaction is direct and associates SNAPIN with the CSN complex. Interacts with STON2. Interacts (ATP-bound) with SYNE3 (via KASH domain); the interaction is required for SYNE3 nuclear envelope localization. Interacts with VIM; the interaction associates TOR1A with the cytoskeleton. Interacts with PLEC. Interacts (ATP-bound) with SLC6A3; regulates SLC6A3 transport to the plasma membrane. N-glycosylated. In terms of tissue distribution, widely expressed (at protein level).

It is found in the endoplasmic reticulum lumen. Its subcellular location is the nucleus membrane. It localises to the cell projection. The protein localises to the growth cone. The protein resides in the cytoplasmic vesicle membrane. It is found in the synapse. Its subcellular location is the synaptosome. It localises to the cytoplasm. The protein localises to the cytoskeleton. The protein resides in the cytoplasmic vesicle. It is found in the secretory vesicle. Its subcellular location is the synaptic vesicle. The catalysed reaction is ATP + H2O = ADP + phosphate + H(+). Its function is as follows. Protein with chaperone functions important for the control of protein folding, processing, stability and localization as well as for the reduction of misfolded protein aggregates. Involved in the regulation of synaptic vesicle recycling, controls STON2 protein stability in collaboration with the COP9 signalosome complex (CSN). In the nucleus, may link the cytoskeleton with the nuclear envelope, this mechanism seems to be crucial for the control of nuclear polarity, cell movement and, specifically in neurons, nuclear envelope integrity. Participates in the cellular trafficking and may regulate the subcellular location of multipass membrane proteins such as the dopamine transporter SLC6A3, leading to the modulation of dopamine neurotransmission. In the endoplasmic reticulum, plays a role in the quality control of protein folding by increasing clearance of misfolded proteins such as SGCE variants or holding them in an intermediate state for proper refolding. May have a redundant function with TOR1B in non-neural tissues. This chain is Torsin-1A (Tor1a), found in Mus musculus (Mouse).